Reading from the N-terminus, the 40-residue chain is LTCVKSDSIWFPTSEDCPDGQNLCFKKWQYISPRMYDFTR.

A disulfide bridge connects residues Cys3 and Cys24.

It belongs to the three-finger toxin family. Short-chain subfamily. Aminergic toxin sub-subfamily. In terms of assembly, monomer. Contains 4 disulfide bonds. In terms of tissue distribution, expressed by the venom gland.

The protein localises to the secreted. Functionally, binds irreversibly and specifically to M1 (CHRM1) muscarinic acetylcholine receptors, blocking further binding of antagonists and preventing the action of agonists. The chain is Muscarinic m1-toxin3 from Dendroaspis angusticeps (Eastern green mamba).